The sequence spans 229 residues: 7-cyano-7-deazaguanine synthase (229 aa).

Leu14 to Leu24 is an ATP binding site. Zn(2+) is bound by residues Cys192, Cys200, Cys203, and Cys206.

This sequence belongs to the QueC family. The cofactor is Zn(2+).

The catalysed reaction is 7-carboxy-7-deazaguanine + NH4(+) + ATP = 7-cyano-7-deazaguanine + ADP + phosphate + H2O + H(+). It functions in the pathway purine metabolism; 7-cyano-7-deazaguanine biosynthesis. Catalyzes the ATP-dependent conversion of 7-carboxy-7-deazaguanine (CDG) to 7-cyano-7-deazaguanine (preQ(0)). This chain is 7-cyano-7-deazaguanine synthase, found in Laribacter hongkongensis (strain HLHK9).